The sequence spans 1167 residues: Topoisomerase 1-associated factor 1 (1167 aa).

Disordered stretches follow at residues 332–353, 563–594, 889–969, 981–1093, and 1105–1167; these read SKRW…NNDF, SRRR…DYAE, KYSH…LENT, YVHA…DAID, and FDDD…SDSE. The span at 572–582 shows a compositional bias: basic and acidic residues; it reads REEQLVNKGSD. Acidic residues-rich tracts occupy residues 583 to 593 and 949 to 958; these read EEQESEDEDYA and EEEPVDEETL. Basic and acidic residues-rich tracts occupy residues 959–969 and 996–1013; these read EERRQARLENT and EFFR…ERIK. Residues 1062-1074 are compositionally biased toward acidic residues; that stretch reads ELEEDDILMDDME. Residues 1078-1088 show a composition bias toward polar residues; that stretch reads RASSGEYSSND. The segment covering 1110 to 1127 has biased composition (basic and acidic residues); it reads AFGRDRDKDETSVDRDGA.

Belongs to the timeless family.

The protein resides in the nucleus. Functionally, involved in chromosome segregation during meiosis and DNA damage repair. This chain is Topoisomerase 1-associated factor 1 (tof1), found in Emericella nidulans (strain FGSC A4 / ATCC 38163 / CBS 112.46 / NRRL 194 / M139) (Aspergillus nidulans).